Consider the following 776-residue polypeptide: Ribosomal biogenesis protein LAS1L (776 aa).

Residues 185-227 show a composition bias toward acidic residues; it reads DEDQLDAEDPEEEEREIIADDVLEEIPEPQDDDKDEELAVEDD. A disordered region spans residues 185-247; it reads DEDQLDAEDP…SHPEPSSRHK (63 aa). The segment covering 228–247 has biased composition (basic and acidic residues); that stretch reads ANTKGNEEVASHPEPSSRHK. Residues Ser-425 and Ser-509 each carry the phosphoserine modification. The segment at 501 to 646 is disordered; sequence KAIEGSSSSS…DYDDDEEEDR (146 aa). The span at 544–557 shows a compositional bias: basic and acidic residues; the sequence is GNLKDVKQEEKKEN. Composition is skewed to acidic residues over residues 558–602 and 611–646; these read EEEE…EEEE and MEAD…EEDR. Ser-658 bears the Phosphoserine mark. Residues 677 to 696 form an interaction with NOL9 region; the sequence is SAWQVSSEDVRWGTFPLGRL. A disordered region spans residues 733-759; sequence SSTLSLCCGGSNTNSSSSSSSGNMEGL. A compositionally biased stretch (low complexity) spans 741–755; it reads GGSNTNSSSSSSSGN.

It belongs to the LAS1 family. As to quaternary structure, component of some MLL1/MLL complex, at least composed of the core components KMT2A/MLL1, ASH2L, HCFC1/HCF1, WDR5 and RBBP5, as well as the facultative components BACC1, CHD8, E2F6, HSP70, INO80C, KANSL1, LAS1L, MAX, MCRS1, MGA, MYST1/MOF, PELP1, PHF20, PRP31, RING2, RUVB1/TIP49A, RUVB2/TIP49B, SENP3, TAF1, TAF4, TAF6, TAF7, TAF9 and TEX10. Component of the 5FMC complex, at least composed of PELP1, LAS1L, TEX10, WDR18 and SENP3; the complex interacts with methylated CHTOP and ZNF148. Interacts with NOL9 to form an ITS2 pre-rRNA endonuclease-kinase complex.

Its subcellular location is the nucleus. The protein localises to the nucleolus. It localises to the nucleoplasm. The protein resides in the cytoplasm. Functionally, required for the synthesis of the 60S ribosomal subunit and maturation of the 28S rRNA. Functions as a component of the Five Friends of Methylated CHTOP (5FMC) complex; the 5FMC complex is recruited to ZNF148 by methylated CHTOP, leading to desumoylation of ZNF148 and subsequent transactivation of ZNF148 target genes. Required for the efficient pre-rRNA processing at both ends of internal transcribed spacer 2 (ITS2). This Mus musculus (Mouse) protein is Ribosomal biogenesis protein LAS1L (Las1l).